Here is a 182-residue protein sequence, read N- to C-terminus: Adenine phosphoribosyltransferase (182 aa).

The protein belongs to the purine/pyrimidine phosphoribosyltransferase family. As to quaternary structure, homodimer.

It is found in the cytoplasm. The enzyme catalyses AMP + diphosphate = 5-phospho-alpha-D-ribose 1-diphosphate + adenine. Its pathway is purine metabolism; AMP biosynthesis via salvage pathway; AMP from adenine: step 1/1. Functionally, catalyzes a salvage reaction resulting in the formation of AMP, that is energically less costly than de novo synthesis. This is Adenine phosphoribosyltransferase from Ectopseudomonas mendocina (strain ymp) (Pseudomonas mendocina).